The primary structure comprises 438 residues: Aspartic proteinase nepenthesin-2 (438 aa).

Positions 1–24 are cleaved as a signal peptide; that stretch reads MASPLYSVVLGLAIVSAIVAPTSS. The propeptide at 25–79 is activation peptide; that stretch reads TSRGTLLHHGQKRPQPGLRVDLEQVDSGKNLTKYELIKRAIKRGERRMRSINAML. N54 is a glycosylation site (N-linked (GlcNAc...) asparagine). A Peptidase A1 domain is found at 96 to 431; it reads YLMNVAIGTP…DLQNLAVSFV (336 aa). D114 is an active-site residue. Intrachain disulfides connect C124-C127, C130-C204, C151-C169, C156-C164, C241-C435, and C354-C395. D315 is a catalytic residue.

Belongs to the peptidase A1 family.

Its subcellular location is the secreted. The catalysed reaction is Similar to pepsin, but also cleaves on either side of Asp and at Lys-|-Arg.. With respect to regulation, inhibited by pepstatin and by diazoacetyl-D,L-norleucine methyl ester (DAN) in the presence of Cu(2+) ions. Its function is as follows. Extracellular proteinase found in the pitcher fluid of carnivorous plants. Digest prey for nitrogen uptake. The chain is Aspartic proteinase nepenthesin-2 (nep2) from Nepenthes gracilis (Slender pitcher plant).